Here is a 203-residue protein sequence, read N- to C-terminus: Large ribosomal subunit protein uL6 (203 aa).

Belongs to the universal ribosomal protein uL6 family. Part of the 50S ribosomal subunit.

Functionally, this protein binds to the 23S rRNA, and is important in its secondary structure. It is located near the subunit interface in the base of the L7/L12 stalk, and near the tRNA binding site of the peptidyltransferase center. This is Large ribosomal subunit protein uL6 from Hyphomonas neptunium (strain ATCC 15444).